The sequence spans 311 residues: Porphobilinogen deaminase (311 aa).

An S-(dipyrrolylmethanemethyl)cysteine modification is found at cysteine 241.

This sequence belongs to the HMBS family. As to quaternary structure, monomer. The cofactor is dipyrromethane.

The catalysed reaction is 4 porphobilinogen + H2O = hydroxymethylbilane + 4 NH4(+). It participates in porphyrin-containing compound metabolism; protoporphyrin-IX biosynthesis; coproporphyrinogen-III from 5-aminolevulinate: step 2/4. In terms of biological role, tetrapolymerization of the monopyrrole PBG into the hydroxymethylbilane pre-uroporphyrinogen in several discrete steps. In Carboxydothermus hydrogenoformans (strain ATCC BAA-161 / DSM 6008 / Z-2901), this protein is Porphobilinogen deaminase.